We begin with the raw amino-acid sequence, 147 residues long: D-aminoacyl-tRNA deacylase (147 aa).

A Gly-cisPro motif, important for rejection of L-amino acids motif is present at residues 136 to 137 (GP).

The protein belongs to the DTD family. As to quaternary structure, homodimer.

It localises to the cytoplasm. It carries out the reaction glycyl-tRNA(Ala) + H2O = tRNA(Ala) + glycine + H(+). The enzyme catalyses a D-aminoacyl-tRNA + H2O = a tRNA + a D-alpha-amino acid + H(+). In terms of biological role, an aminoacyl-tRNA editing enzyme that deacylates mischarged D-aminoacyl-tRNAs. Also deacylates mischarged glycyl-tRNA(Ala), protecting cells against glycine mischarging by AlaRS. Acts via tRNA-based rather than protein-based catalysis; rejects L-amino acids rather than detecting D-amino acids in the active site. By recycling D-aminoacyl-tRNA to D-amino acids and free tRNA molecules, this enzyme counteracts the toxicity associated with the formation of D-aminoacyl-tRNA entities in vivo and helps enforce protein L-homochirality. This is D-aminoacyl-tRNA deacylase from Streptococcus pneumoniae serotype 2 (strain D39 / NCTC 7466).